Reading from the N-terminus, the 274-residue chain is Orotidine 5'-phosphate decarboxylase (274 aa).

Substrate contacts are provided by residues D40, K62–H64, D93–T102, Y227, and R245. K95 acts as the Proton donor in catalysis.

The protein belongs to the OMP decarboxylase family.

It carries out the reaction orotidine 5'-phosphate + H(+) = UMP + CO2. It participates in pyrimidine metabolism; UMP biosynthesis via de novo pathway; UMP from orotate: step 2/2. This chain is Orotidine 5'-phosphate decarboxylase (pyrG), found in Emericella nidulans (strain FGSC A4 / ATCC 38163 / CBS 112.46 / NRRL 194 / M139) (Aspergillus nidulans).